Consider the following 156-residue polypeptide: Ribosome maturation factor RimP (156 aa).

Belongs to the RimP family.

Its subcellular location is the cytoplasm. In terms of biological role, required for maturation of 30S ribosomal subunits. The polypeptide is Ribosome maturation factor RimP (Prochlorococcus marinus (strain NATL1A)).